The following is a 283-amino-acid chain: Cilia- and flagella-associated protein 77 (283 aa).

Positions Asp-151–Gly-170 are disordered.

It belongs to the CFAP77 family. In terms of assembly, microtubule inner protein component of sperm flagellar doublet microtubules.

The protein localises to the cytoplasm. It is found in the cytoskeleton. The protein resides in the cilium axoneme. It localises to the flagellum axoneme. In terms of biological role, microtubule inner protein (MIP) part of the dynein-decorated doublet microtubules (DMTs) in cilia axoneme, which is required for motile cilia beating. This is Cilia- and flagella-associated protein 77 from Mus musculus (Mouse).